The primary structure comprises 392 residues: N-acetylneuraminate epimerase (392 aa).

Residues 1 to 35 (MTQIYHQYKKKLSTKVILLSALTLCITFSLPYANA) form the signal peptide. Kelch repeat units lie at residues 56 to 100 (HLYV…VALS), 102 to 155 (KLYV…TTLN), 157 to 192 (TQALLLGGVNKAIFDGYFTDLAAAGGNETQKNAVVN), 193 to 238 (AYFD…TAKK), 241 to 290 (LILI…LAGA), 312 to 361 (QQFN…QDKD), and 363 to 392 (VILLGGETSDGVATSAVTQLSWQGGKLHLE). Glutamate 247 serves as the catalytic Proton acceptor.

This sequence belongs to the NanM family. In terms of assembly, homodimer.

Its subcellular location is the periplasm. The catalysed reaction is N-acetyl-alpha-neuraminate = N-acetyl-beta-neuraminate. Converts alpha-N-acetylneuranimic acid (Neu5Ac) to the beta-anomer, accelerating the equilibrium between the alpha- and beta-anomers. Probably facilitates sialidase-negative bacteria to compete successfully for limited amounts of extracellular Neu5Ac, which is likely taken up in the beta-anomer. In addition, the rapid removal of sialic acid from solution might be advantageous to the bacterium to damp down host responses. The chain is N-acetylneuraminate epimerase from Yersinia enterocolitica serotype O:8 / biotype 1B (strain NCTC 13174 / 8081).